Reading from the N-terminus, the 167-residue chain is NAD(P)H-quinone oxidoreductase subunit I, chloroplastic (167 aa).

4Fe-4S ferredoxin-type domains are found at residues 55–84 (GRIH…VDWK) and 95–124 (LNYS…MTEE). 8 residues coordinate [4Fe-4S] cluster: Cys64, Cys67, Cys70, Cys74, Cys104, Cys107, Cys110, and Cys114.

The protein belongs to the complex I 23 kDa subunit family. NDH is composed of at least 16 different subunits, 5 of which are encoded in the nucleus. It depends on [4Fe-4S] cluster as a cofactor.

It is found in the plastid. Its subcellular location is the chloroplast thylakoid membrane. It catalyses the reaction a plastoquinone + NADH + (n+1) H(+)(in) = a plastoquinol + NAD(+) + n H(+)(out). The enzyme catalyses a plastoquinone + NADPH + (n+1) H(+)(in) = a plastoquinol + NADP(+) + n H(+)(out). Its function is as follows. NDH shuttles electrons from NAD(P)H:plastoquinone, via FMN and iron-sulfur (Fe-S) centers, to quinones in the photosynthetic chain and possibly in a chloroplast respiratory chain. The immediate electron acceptor for the enzyme in this species is believed to be plastoquinone. Couples the redox reaction to proton translocation, and thus conserves the redox energy in a proton gradient. In Aethionema grandiflorum (Persian stone-cress), this protein is NAD(P)H-quinone oxidoreductase subunit I, chloroplastic.